The primary structure comprises 211 residues: Protein-methionine-sulfoxide reductase heme-binding subunit MsrQ (211 aa).

5 consecutive transmembrane segments (helical) span residues 17–37, 82–102, 116–136, 153–173, and 178–198; these read LAGLLPFLWLVWAINHGGLGA, LWCFAWATLHLTSYALLELGV, PYLTLGIISWVILLALAFTST, FVYLVAILAPIHYLWSVKIIS, and IYAGLAVLLLALRYKKLLSLF.

The protein belongs to the MsrQ family. As to quaternary structure, heterodimer of a catalytic subunit (MsrP) and a heme-binding subunit (MsrQ). The cofactor is FMN. It depends on heme b as a cofactor.

Its subcellular location is the cell inner membrane. Its function is as follows. Part of the MsrPQ system that repairs oxidized periplasmic proteins containing methionine sulfoxide residues (Met-O), using respiratory chain electrons. Thus protects these proteins from oxidative-stress damage caused by reactive species of oxygen and chlorine generated by the host defense mechanisms. MsrPQ is essential for the maintenance of envelope integrity under bleach stress, rescuing a wide series of structurally unrelated periplasmic proteins from methionine oxidation, including the primary periplasmic chaperone SurA and the lipoprotein Pal. MsrQ provides electrons for reduction to the reductase catalytic subunit MsrP, using the quinone pool of the respiratory chain. The polypeptide is Protein-methionine-sulfoxide reductase heme-binding subunit MsrQ (Shigella boydii serotype 4 (strain Sb227)).